The sequence spans 285 residues: Tryptophan synthase alpha chain (285 aa).

Active-site proton acceptor residues include glutamate 53 and aspartate 64.

This sequence belongs to the TrpA family. As to quaternary structure, tetramer of two alpha and two beta chains.

The enzyme catalyses (1S,2R)-1-C-(indol-3-yl)glycerol 3-phosphate + L-serine = D-glyceraldehyde 3-phosphate + L-tryptophan + H2O. The protein operates within amino-acid biosynthesis; L-tryptophan biosynthesis; L-tryptophan from chorismate: step 5/5. Functionally, the alpha subunit is responsible for the aldol cleavage of indoleglycerol phosphate to indole and glyceraldehyde 3-phosphate. The protein is Tryptophan synthase alpha chain of Bordetella pertussis (strain Tohama I / ATCC BAA-589 / NCTC 13251).